Here is a 578-residue protein sequence, read N- to C-terminus: MAAAAAGGLPGKGHDISLAALRRHDPYISRIVDVASQVALYTFGHRANEWEKTGVEGTLFVYTRSASPKHGFTIMNRLSMENRTEPITKDLDFQLQNPFLLYRNGTLSIYGIWFYDKEECQRIAKLMKNLTQSEQLKACHGAGSSPVTLSSGEGQEVDILQMLTKAKDEYTKCKTCSEPKQMTNSSAICDNPKLIKPVPVRPSSSQRLQGPAPSKTSDPEPQHLSLTALFGKQDKAPCQETVKPSRTFAHHHHHHHQQQQETRPVHHGVACSLSCEEPRKLSLPVEKQLCPAIQKLMLGSPGLHPLPQHPEQWSCKSGSPSPAGGILPGPVQLGSPWNGRVAHCTQSTCRGHKLLEQLQGAPGAVHKYNPCAPTGPAVATQVAPGQSVAQSQLVYFSGPLQPPAPGHQALRKEQGALPAQAVSLSGSQESSPTVLPTQELLRKLQVVHQEQQAAPRPALAARFPVSAQGSGTEKPLEAWVSKTASMEKQAPLLQSTCAPLRETDNGLMALGGQELPAASSNLLLPLQNWESSTVASRPLTRLQLQEALLNLIQNDDNFLSIIYEAYLFSVTQAAMRTT.

At A2 the chain carries N-acetylalanine. Phosphoserine is present on residues S144 and S145. Disordered regions lie at residues 187–222 and 246–265; these read AICD…PEPQ and RTFA…TRPV. Positions 248–257 are enriched in basic residues; it reads FAHHHHHHHQ. Residues S274 and S335 each carry the phosphoserine modification. T380 carries the post-translational modification Phosphothreonine.

It belongs to the DCP1 family. In terms of assembly, interacts with DCP1A.

It is found in the cytoplasm. It localises to the nucleus. It carries out the reaction a 5'-end (N(7)-methyl 5'-triphosphoguanosine)-ribonucleoside in mRNA + H2O = N(7)-methyl-GDP + a 5'-end phospho-ribonucleoside in mRNA + 2 H(+). Functionally, may play a role in the degradation of mRNAs, both in normal mRNA turnover and in nonsense-mediated mRNA decay. May remove the 7-methyl guanine cap structure from mRNA molecules, yielding a 5'-phosphorylated mRNA fragment and 7m-GDP. This is mRNA-decapping enzyme 1B (Dcp1b) from Mus musculus (Mouse).